The chain runs to 447 residues: Kynurenine 3-monooxygenase (447 aa).

The protein belongs to the aromatic-ring hydroxylase family. KMO subfamily. It depends on FAD as a cofactor.

It catalyses the reaction L-kynurenine + NADPH + O2 + H(+) = 3-hydroxy-L-kynurenine + NADP(+) + H2O. Its pathway is cofactor biosynthesis; NAD(+) biosynthesis; quinolinate from L-kynurenine: step 1/3. Its function is as follows. Catalyzes the hydroxylation of L-kynurenine (L-Kyn) to form 3-hydroxy-L-kynurenine (L-3OHKyn). Required for synthesis of quinolinic acid. The sequence is that of Kynurenine 3-monooxygenase from Christiangramia forsetii (strain DSM 17595 / CGMCC 1.15422 / KT0803) (Gramella forsetii).